A 92-amino-acid chain; its full sequence is Long neurotoxin 73 (92 aa).

The N-terminal stretch at 1 to 21 is a signal peptide; the sequence is MKTLLLTLVVVTIVCLDLGDS. 5 disulfides stabilise this stretch: C24–C41, C34–C62, C47–C51, C66–C77, and C78–C83.

The protein belongs to the three-finger toxin family. Long-chain subfamily. Type II alpha-neurotoxin sub-subfamily. Expressed by the venom gland.

It localises to the secreted. Binds with high affinity to muscular (alpha-1/CHRNA1) and neuronal (alpha-7/CHRNA7) nicotinic acetylcholine receptor (nAChR) and inhibits acetylcholine from binding to the receptor, thereby impairing neuromuscular and neuronal transmission. The protein is Long neurotoxin 73 of Drysdalia coronoides (White-lipped snake).